The primary structure comprises 128 residues: Iron-sulfur cluster insertion protein ErpA (128 aa).

C56, C120, and C122 together coordinate iron-sulfur cluster.

It belongs to the HesB/IscA family. Homodimer. Iron-sulfur cluster serves as cofactor.

Functionally, required for insertion of 4Fe-4S clusters for at least IspG. This Xanthomonas euvesicatoria pv. vesicatoria (strain 85-10) (Xanthomonas campestris pv. vesicatoria) protein is Iron-sulfur cluster insertion protein ErpA.